Consider the following 209-residue polypeptide: Uracil phosphoribosyltransferase (209 aa).

5-phospho-alpha-D-ribose 1-diphosphate contacts are provided by residues Arg-79, Arg-104, and 131–139 (DPMLATGGS). Residues Val-194 and 199–201 (GDA) each bind uracil. Asp-200 serves as a coordination point for 5-phospho-alpha-D-ribose 1-diphosphate.

It belongs to the UPRTase family. Requires Mg(2+) as cofactor.

It catalyses the reaction UMP + diphosphate = 5-phospho-alpha-D-ribose 1-diphosphate + uracil. The protein operates within pyrimidine metabolism; UMP biosynthesis via salvage pathway; UMP from uracil: step 1/1. With respect to regulation, allosterically activated by GTP. Catalyzes the conversion of uracil and 5-phospho-alpha-D-ribose 1-diphosphate (PRPP) to UMP and diphosphate. This Clostridium botulinum (strain ATCC 19397 / Type A) protein is Uracil phosphoribosyltransferase.